A 493-amino-acid chain; its full sequence is Transmembrane protein 145 (493 aa).

A helical membrane pass occupies residues 9-29 (LRRLLPPLLLLLLSLPPRARA). Asparagine 35 carries an N-linked (GlcNAc...) asparagine glycan. The next 7 helical transmembrane spans lie at 175–195 (VTFL…GYLL), 207–227 (MFMA…IYWG), 241–261 (ILAK…LILL), 282–302 (VYMT…AEFF), 318–338 (GLIG…LVSL), 349–369 (VPFF…ALIA), and 381–401 (IVNG…LIMT). N-linked (GlcNAc...) asparagine glycosylation occurs at asparagine 444. Residues 464–493 (PATSPLPRAAPDSGLPLFRDLRPPGPLRDL) are disordered.

The protein localises to the membrane. The protein is Transmembrane protein 145 (TMEM145) of Homo sapiens (Human).